We begin with the raw amino-acid sequence, 320 residues long: Ferrochelatase (320 aa).

Fe cation is bound by residues His-194 and Glu-275.

The protein belongs to the ferrochelatase family. Monomer.

The protein resides in the cytoplasm. The enzyme catalyses heme b + 2 H(+) = protoporphyrin IX + Fe(2+). The protein operates within porphyrin-containing compound metabolism; protoheme biosynthesis; protoheme from protoporphyrin-IX: step 1/1. Functionally, catalyzes the ferrous insertion into protoporphyrin IX. In Escherichia coli (strain K12 / MC4100 / BW2952), this protein is Ferrochelatase.